Consider the following 1018-residue polypeptide: MSLQFQNDCGDSVKQAIIEELQNLLSSDTGVLQQTEKRIKQLEYTEGYGVYLSEIIMNQAHELPLRQIAIVMLTRYVENHWTDDDDVKRKANGCMASEQAKRTIRNILPNGLYDPNSKIRSSVAHTISTIAATDYPHCWAELFDIIVKCLGGNEDSIHGAMQVLQDFSYDVEQIKELGPVVIPEVYRIFDSEQNYSIKTRVSAIRILKPLFASIAALITNKEEQSTMMSSILTNFMDKLMHYLSMNSGAVSSFLLRTEIIKVFTHLVNEMPKYINPFMDRVLPIVWQLLTQIAETYVKVSVNQTETSPLASGDSEEDDEQTNFQSLIIQILEFINCILTCNKLRGSIKNVLADLIYITIVYIQLSEEQLEDWHDDPEKFVDDEDDGGVELTVRMCGRDVLLAINDEFGANAIQPLQEALGRHFSVADAEKAANNPNWWKIQEACMDAVHAFRDVILAGDSTFDLLNYLTIVRNLLVHQESPPLVGRALWTLSIYSKSDLYNPQMLTEILDVTLCSLSPEKSHILRISAVRTLNGFLQANETIDGEKRTLLVSKLPGFLDGIMALVPGSKAAVLALLMEALTFMVKFDAEFAFASQAKITPLAIAVFLKYTEDPYVLETVQDLIKALCQRKECLGPLQEKFIPTIVSILGLTGAASTEKQDIALDVLNTIVRYTEPPLNNSLLETAFPAIINCVLHTDDHAVMVAGGECLRSFINVSPEQICSYKNGEGINCIMQVVATVLLNPMNSEMTAAGQIGRLVITIITKMGSMLGQNVDMLLKAVISKMQNLECLKVIMNLVLIFAHLFLTQMDAVLNFLSTVPGPNGEPAMQFVLTNWLSRQNSFFGNYERKVTTMALCKLFEYGVATQDNRLTTITFKELVDDPTDTRRRTRSVAATTQKWVTIPALVKIFKVLISEYQHFQEGKSDEPLTDSEEDGDDEDAPGNPDKPRYISDLFESDEDNAEDEQLLQELLKETNYQGDIADNLQKFLTTFTQNEHFPTFYEHLTEGERLILLSKVQQK.

Positions 35–114 (TEKRIKQLEY…RNILPNGLYD (80 aa)) constitute an Importin N-terminal domain. Residues 921-950 (GKSDEPLTDSEEDGDDEDAPGNPDKPRYIS) form a disordered region. Positions 926–939 (PLTDSEEDGDDEDA) are enriched in acidic residues.

Belongs to the importin beta family.

The protein localises to the cytoplasm. The protein resides in the nucleus. Functionally, nuclear transport receptor that mediates nuclear import of proteins. Serves as receptor for nuclear localization signals (NLS) in cargo substrates. Is thought to mediate docking of the importin/substrate complex to the nuclear pore complex (NPC) through binding to nucleoporin and the complex is subsequently translocated through the pore by an energy requiring, Ran-dependent mechanism. Mediates the import of pre-assembled proteasomes into the nucleus during the late stages of sperm development. The chain is Importin-9 from Drosophila melanogaster (Fruit fly).